The chain runs to 376 residues: Ribonucleoside-diphosphate reductase subunit beta (376 aa).

Fe cation contacts are provided by aspartate 85, glutamate 116, and histidine 119. Tyrosine 123 is a catalytic residue. Positions 205, 239, and 242 each coordinate Fe cation.

This sequence belongs to the ribonucleoside diphosphate reductase small chain family. Tetramer of two alpha and two beta subunits. Fe cation is required as a cofactor.

The catalysed reaction is a 2'-deoxyribonucleoside 5'-diphosphate + [thioredoxin]-disulfide + H2O = a ribonucleoside 5'-diphosphate + [thioredoxin]-dithiol. Its function is as follows. Provides the precursors necessary for DNA synthesis. Catalyzes the biosynthesis of deoxyribonucleotides from the corresponding ribonucleotides. The polypeptide is Ribonucleoside-diphosphate reductase subunit beta (nrdB) (Buchnera aphidicola subsp. Acyrthosiphon pisum (strain APS) (Acyrthosiphon pisum symbiotic bacterium)).